Here is a 213-residue protein sequence, read N- to C-terminus: LexA repressor 2 (213 aa).

Positions 27–47 (QTEIARAFGFKGVRAAQYHLE) form a DNA-binding region, H-T-H motif. Active-site for autocatalytic cleavage activity residues include Ser-133 and Lys-170.

This sequence belongs to the peptidase S24 family. In terms of assembly, homodimer.

The catalysed reaction is Hydrolysis of Ala-|-Gly bond in repressor LexA.. In terms of biological role, represses a number of genes involved in the response to DNA damage (SOS response), including recA and lexA. In the presence of single-stranded DNA, RecA interacts with LexA causing an autocatalytic cleavage which disrupts the DNA-binding part of LexA, leading to derepression of the SOS regulon and eventually DNA repair. The sequence is that of LexA repressor 2 from Xanthomonas oryzae pv. oryzae (strain KACC10331 / KXO85).